A 195-amino-acid chain; its full sequence is uncharacterized protein (195 aa).

This is an uncharacterized protein from Bacillus subtilis (strain 168).